We begin with the raw amino-acid sequence, 243 residues long: Flavin-dependent thymidylate synthase (243 aa).

The ThyX domain occupies 2–207 (VKVKLINYTP…ELKPIIEWAK (206 aa)). FAD contacts are provided by residues serine 56, 80-82 (RHR), and glutamine 88. DUMP is bound by residues 77 to 80 (QLVR), 88 to 92 (QQSQR), and arginine 146. The ThyX motif signature appears at 80-90 (RHRIASYTQQS). FAD contacts are provided by residues 162–164 (NLR) and histidine 168. Arginine 173 contacts dUMP. The Involved in ionization of N3 of dUMP, leading to its activation role is filled by arginine 173.

Belongs to the thymidylate synthase ThyX family. In terms of assembly, homotetramer. FAD is required as a cofactor.

It carries out the reaction dUMP + (6R)-5,10-methylene-5,6,7,8-tetrahydrofolate + NADPH + H(+) = dTMP + (6S)-5,6,7,8-tetrahydrofolate + NADP(+). Its pathway is pyrimidine metabolism; dTTP biosynthesis. In terms of biological role, catalyzes the reductive methylation of 2'-deoxyuridine-5'-monophosphate (dUMP) to 2'-deoxythymidine-5'-monophosphate (dTMP) while utilizing 5,10-methylenetetrahydrofolate (mTHF) as the methyl donor, and NADPH and FADH(2) as the reductant. The polypeptide is Flavin-dependent thymidylate synthase (Pyrococcus horikoshii (strain ATCC 700860 / DSM 12428 / JCM 9974 / NBRC 100139 / OT-3)).